A 763-amino-acid polypeptide reads, in one-letter code: Phosphoglycerol transferase I (763 aa).

4 helical membrane passes run 1–21 (MSELLSIALFLASVLIYAWKA), 26–46 (WWFAAILAVLGLFVVLNITLY), 77–97 (ILPGAGIVLALAAVFSALGWV), and 108–128 (FGYSLLALLLALGSVDASPAF).

It belongs to the OpgB family.

The protein resides in the cell inner membrane. The enzyme catalyses a phosphatidylglycerol + a membrane-derived-oligosaccharide D-glucose = a 1,2-diacyl-sn-glycerol + a membrane-derived-oligosaccharide 6-(glycerophospho)-D-glucose.. It functions in the pathway glycan metabolism; osmoregulated periplasmic glucan (OPG) biosynthesis. Functionally, transfers a phosphoglycerol residue from phosphatidylglycerol to the membrane-bound nascent glucan backbones. The protein is Phosphoglycerol transferase I of Citrobacter koseri (strain ATCC BAA-895 / CDC 4225-83 / SGSC4696).